Consider the following 557-residue polypeptide: 2-succinyl-5-enolpyruvyl-6-hydroxy-3-cyclohexene-1-carboxylate synthase (557 aa).

It belongs to the TPP enzyme family. MenD subfamily. Homodimer. Mg(2+) is required as a cofactor. The cofactor is Mn(2+). It depends on thiamine diphosphate as a cofactor.

The enzyme catalyses isochorismate + 2-oxoglutarate + H(+) = 5-enolpyruvoyl-6-hydroxy-2-succinyl-cyclohex-3-ene-1-carboxylate + CO2. It functions in the pathway quinol/quinone metabolism; 1,4-dihydroxy-2-naphthoate biosynthesis; 1,4-dihydroxy-2-naphthoate from chorismate: step 2/7. The protein operates within quinol/quinone metabolism; menaquinone biosynthesis. Catalyzes the thiamine diphosphate-dependent decarboxylation of 2-oxoglutarate and the subsequent addition of the resulting succinic semialdehyde-thiamine pyrophosphate anion to isochorismate to yield 2-succinyl-5-enolpyruvyl-6-hydroxy-3-cyclohexene-1-carboxylate (SEPHCHC). This Staphylococcus aureus (strain USA300) protein is 2-succinyl-5-enolpyruvyl-6-hydroxy-3-cyclohexene-1-carboxylate synthase.